A 177-amino-acid polypeptide reads, in one-letter code: Large ribosomal subunit protein uL6 (177 aa).

Belongs to the universal ribosomal protein uL6 family. Part of the 50S ribosomal subunit.

Functionally, this protein binds to the 23S rRNA, and is important in its secondary structure. It is located near the subunit interface in the base of the L7/L12 stalk, and near the tRNA binding site of the peptidyltransferase center. The polypeptide is Large ribosomal subunit protein uL6 (Agrobacterium fabrum (strain C58 / ATCC 33970) (Agrobacterium tumefaciens (strain C58))).